The following is a 344-amino-acid chain: Succinylglutamate desuccinylase (344 aa).

3 residues coordinate Zn(2+): histidine 63, glutamate 66, and histidine 160. The active site involves glutamate 224.

The protein belongs to the AspA/AstE family. Succinylglutamate desuccinylase subfamily. Zn(2+) is required as a cofactor.

It catalyses the reaction N-succinyl-L-glutamate + H2O = L-glutamate + succinate. It functions in the pathway amino-acid degradation; L-arginine degradation via AST pathway; L-glutamate and succinate from L-arginine: step 5/5. Transforms N(2)-succinylglutamate into succinate and glutamate. The protein is Succinylglutamate desuccinylase of Shewanella sp. (strain MR-7).